A 312-amino-acid polypeptide reads, in one-letter code: Flavonol 3-sulfotransferase (312 aa).

Position 59 to 64 (59 to 64 (KSGTTW)) interacts with 3'-phosphoadenylyl sulfate. The Proton acceptor role is filled by histidine 119. 3'-phosphoadenylyl sulfate-binding positions include arginine 141, serine 149, tyrosine 207, and 277 to 279 (RKG).

Belongs to the sulfotransferase 1 family. Highest in shoot tips and lowest in mature leaves and roots.

Its subcellular location is the cytoplasm. Its function is as follows. Sulfotransferase that utilizes 3'-phospho-5'-adenylyl sulfate (PAPS) as sulfonate donor to catalyze the sulfate conjugation of quercetin, rhamnetin and isorhamnetin but not kaempferol. O-sulfation of position 3 of flavonol. May play a role in auxin transport. This Flaveria bidentis (Coastal plain yellowtops) protein is Flavonol 3-sulfotransferase.